Here is a 415-residue protein sequence, read N- to C-terminus: uncharacterized protein (415 aa).

4 residues coordinate [4Fe-4S] cluster: Cys-66, Cys-72, Cys-75, and Cys-149. S-adenosyl-L-methionine contacts are provided by Gln-249, Phe-276, Glu-296, and Asp-344. The active-site Nucleophile is the Cys-370.

It belongs to the class I-like SAM-binding methyltransferase superfamily. RNA M5U methyltransferase family.

This is an uncharacterized protein from Brucella melitensis biotype 1 (strain ATCC 23456 / CCUG 17765 / NCTC 10094 / 16M).